We begin with the raw amino-acid sequence, 872 residues long: Alanine--tRNA ligase (872 aa).

4 residues coordinate Zn(2+): His-567, His-571, Cys-669, and His-673.

This sequence belongs to the class-II aminoacyl-tRNA synthetase family. Zn(2+) is required as a cofactor.

It localises to the cytoplasm. The catalysed reaction is tRNA(Ala) + L-alanine + ATP = L-alanyl-tRNA(Ala) + AMP + diphosphate. Catalyzes the attachment of alanine to tRNA(Ala) in a two-step reaction: alanine is first activated by ATP to form Ala-AMP and then transferred to the acceptor end of tRNA(Ala). Also edits incorrectly charged Ser-tRNA(Ala) and Gly-tRNA(Ala) via its editing domain. This is Alanine--tRNA ligase from Streptococcus pyogenes serotype M1.